A 181-amino-acid chain; its full sequence is Inner membrane-spanning protein YciB (181 aa).

Helical transmembrane passes span Ile-22–Ala-42, Met-50–Asp-70, Ile-80–Ile-100, Trp-122–Leu-142, and Phe-148–Val-168.

It belongs to the YciB family.

Its subcellular location is the cell inner membrane. Plays a role in cell envelope biogenesis, maintenance of cell envelope integrity and membrane homeostasis. This chain is Inner membrane-spanning protein YciB, found in Aliivibrio fischeri (strain MJ11) (Vibrio fischeri).